We begin with the raw amino-acid sequence, 329 residues long: MAITTLDFNQFRSTSADERQIFCADLCETLSVYGFAKIRNTTLSNELIDEIFKYTRSFFALPNDIKAKAKHPNAPNPHRGWSAIGQERVWKISGFEQNKERTDSYNEFRESFDQGAADDQLFPNRWVDEDDLPGFQAFMEGFYKSCDELHAHLLRAISTGLKLPDTLLPSKHRHNTSELRLLHYPPIPCSALRSNMRIGEHSDFGTLTLLLQDSVGGLQVEDQRNPRSFIPVEPEDGYEVVINIGDCLQRWTNRRLCSANHRVMLPEGKDVDSEEVLDDRYSVAYFGKPDRDVLVDTLPECVEVGERVEYGDHLTALQYNQIKLTRTYG.

A Fe2OG dioxygenase domain is found at 175–289; that stretch reads NTSELRLLHY…RYSVAYFGKP (115 aa). Positions 201, 203, and 261 each coordinate Fe cation. Residue arginine 280 coordinates 2-oxoglutarate.

It belongs to the iron/ascorbate-dependent oxidoreductase family. Requires Fe(2+) as cofactor.

The protein operates within antifungal biosynthesis. 2-oxoglutarate-dependent dioxygenase; part of the gene cluster that mediates the de novo generation of L-homotyrosine from acetyl-CoA and 4-hydroxyphenyl-pyruvate. L-homotyrosine is a building block of echinocandin B, a fungal lipidated cyclic hexapeptide that acts as an antifungal agent. L-homotyrosine 4-hydroxyphenyl-pyruvate first undergoes an aldol-type condensation by htyA with the C-2 of acetyl-CoA followed by the release of CoA to form 2-(4-hydroxybenzyl)-malate. This is followed by isomerization of 2-(4-hydroxy-benzyl)-malate to 3-(4-hydroxybenzyl)-malate by htyD. Thereafter, 3-(4-hydroxybenzyl)-malate undergoes decarboxylation and oxidation to form 2-oxo-4-(4-hydroxybenzyl)butanoic acid, coupled to reduction of NAD(+) to NADH by htyC. The product then undergoes transamination catalyzed by htyB to form L-homotyrosine. The protein is 2-oxoglutarate-dependent dioxygenase htyE of Aspergillus rugulosus (Emericella rugulosa).